The following is a 491-amino-acid chain: Glycogen synthase (491 aa).

Lysine 15 is a binding site for ADP-alpha-D-glucose.

Belongs to the glycosyltransferase 1 family. Bacterial/plant glycogen synthase subfamily.

It carries out the reaction [(1-&gt;4)-alpha-D-glucosyl](n) + ADP-alpha-D-glucose = [(1-&gt;4)-alpha-D-glucosyl](n+1) + ADP + H(+). Its pathway is glycan biosynthesis; glycogen biosynthesis. In terms of biological role, synthesizes alpha-1,4-glucan chains using ADP-glucose. This is Glycogen synthase from Treponema denticola (strain ATCC 35405 / DSM 14222 / CIP 103919 / JCM 8153 / KCTC 15104).